Here is a 264-residue protein sequence, read N- to C-terminus: MGQKIHPTGFRLAVTRNWSSRWYADDKDFGGMLAEDIRVREYLKKKLKSASVGRVVIERPAKNARITVYSARPGVVIGKRGEDIESLKADLQRLMGVPVHVNIEEIRKPETDAQLIADSISQQLEKRIMFRRAMKRAMQNAMRLGAQGIKIMSSGRLNGIEIARTEWYREGRVPLHTLKANIDYGTSEAHTTYGVIGIKVWVYKGDMLANGELPVETAAPREEERRPRRAPRGDRPDGARNGRPGGGRGRAPRKADAAPAPEGE.

In terms of domain architecture, KH type-2 spans Val-39–Arg-107. The disordered stretch occupies residues Pro-214–Glu-264. A compositionally biased stretch (basic and acidic residues) spans Ala-219 to Arg-240.

This sequence belongs to the universal ribosomal protein uS3 family. Part of the 30S ribosomal subunit. Forms a tight complex with proteins S10 and S14.

Its function is as follows. Binds the lower part of the 30S subunit head. Binds mRNA in the 70S ribosome, positioning it for translation. The polypeptide is Small ribosomal subunit protein uS3 (Bordetella avium (strain 197N)).